Here is a 242-residue protein sequence, read N- to C-terminus: MCALVPPLYPNFGWPCGDHSFYETDDVSNTFLDFPLPDLTVTHENVSSENNRTLLDNPVVMKKLNHNASERERRKKINTMFSSLRSCLPPTNQTKKLSVSATVSQALKYIPELQEQVKKLMKKKEELSFQISGQRDLVYTDQNSKSEEGVTSYASTVSSTRLSETEVMVQISSLQTEKCSFGNVLSGVEEDGLVLVGASSSRSHGERLFYSMHLQIKNGQVNSEELGDRLLYLYEKCGHSFT.

The bHLH domain maps to 61-113 (MKKLNHNASERERRKKINTMFSSLRSCLPPTNQTKKLSVSATVSQALKYIPEL).

As to quaternary structure, homodimer. As to expression, expressed constitutively in roots, leaves, and stems.

It is found in the nucleus. Its function is as follows. Plays a role in metal homeostasis. Confers tolerance to high zinc (Zn) and nickel (Ni). The chain is Transcription factor bHLH100 (BHLH100) from Arabidopsis thaliana (Mouse-ear cress).